The primary structure comprises 324 residues: Acetaldehyde dehydrogenase 1 (324 aa).

Ser18–Ile21 is a binding site for NAD(+). The active-site Acyl-thioester intermediate is the Cys136. Residues Ser167 to Asn175 and Asn297 contribute to the NAD(+) site.

Belongs to the acetaldehyde dehydrogenase family.

It carries out the reaction acetaldehyde + NAD(+) + CoA = acetyl-CoA + NADH + H(+). In Parafrankia sp. (strain EAN1pec), this protein is Acetaldehyde dehydrogenase 1.